Reading from the N-terminus, the 436-residue chain is Probable transporter MCH1 (436 aa).

Helical transmembrane passes span 27 to 47 (VVAF…LLFT), 66 to 86 (MISS…GYLA), 93 to 113 (LLSL…SYLV), 119 to 139 (SVIG…SLYF), 155 to 175 (LAIS…AQIL), 188 to 208 (LEVV…ASFV), and 249 to 269 (FVSF…ILNI). The N-linked (GlcNAc...) asparagine glycan is linked to Asn-278. 5 helical membrane-spanning segments follow: residues 295 to 312 (VSIM…LGVL), 325 to 345 (LLVV…SAIL), 347 to 367 (GVSY…IWGI), 373 to 393 (TWGS…MFYG), and 410 to 430 (TAGA…IWYA).

Belongs to the major facilitator superfamily.

The protein localises to the vacuole membrane. Its function is as follows. Probable transporter. The protein is Probable transporter MCH1 (MCH1) of Candida albicans (strain SC5314 / ATCC MYA-2876) (Yeast).